Reading from the N-terminus, the 727-residue chain is MWKSIGELSCDDYVKAGLTLEDAKEFDKLVSDVITKAIETDPRDQWKALVDESVLKPWHPHPLHQLLYYSVYSNWDSSVHGPPLYWFPSLSQSKSTNLGKLMEYHGPRLLGPSYKNPLESFELFRRFSVEHPEVYWSFVIDELSLVFHTPPRCILNKSKPEGTWLPDAVLNIAECCLMPSSHPKKEDDSVAVVWRNEGFDDSPVNRMTIKELREQVMLVANAISGSFEKGDTIAIDMPMTVDAVIIYLAIILAGCIVVSIADSFAAKEIATRLKISKAKGIFTQDYILRGGRRFPLYSRVVEAAPSKVIVLPASGTELHVQLREQDVSWMDFLSNAKPHSSGENYYRPIYLPVESVINILFSSGTTGEPKAIPWTQLSPIRSACDGWAHLDVQVGHTYCWPTNLGWVMGPTLMFSCFLTGATLALYSGSPLGRGFGKFVQDAGVTVLGTVPSLVKTWKRTNCMEGLNWTKIKFFATTGEASNVDDVLWLSSKADYKPVIECCGGTELASSYIIGSPLQPQAFGAFSTPSMTTRIIIFDENGVPYPDDQPCTGEVGLFPQHLGATDRLLNANHDEVYFKGMPMYKETRLRRHGDIVKRTVGGYYNVQGRADDTMNLGGIKTSSIEIERVCDQADECISETAAVTLTPPNGGPELLVIFAVLKEGFKQQSGEELKMKFSRTIQKDLNPLFKVSFVKIVPEFPRTASSKLLRRVLRDQIKQELLSLRSRI.

A Microbody targeting signal motif is present at residues 725–727; sequence SRI.

It belongs to the ATP-dependent AMP-binding enzyme family. In terms of tissue distribution, expressed in flowers.

It localises to the peroxisome. May be involved in the peroxisomal activation of 2,4-dichlorophenoxybutyric acid (2,4-DB), a precursor of active auxins that inhibit root growth. This chain is Probable acyl-activating enzyme 18, peroxisomal (AAE18), found in Arabidopsis thaliana (Mouse-ear cress).